The primary structure comprises 443 residues: Regulator of sigma E protease (443 aa).

Zn(2+) is bound at residue His21. Glu22 is a catalytic residue. His25 contributes to the Zn(2+) binding site. A helical membrane pass occupies residues 98-118; sequence FVIIAGPLANFIFAIFAYWVI. 2 PDZ domains span residues 106 to 185 and 198 to 287; these read ANFI…SPFN and NWTF…TPVR. Transmembrane regions (helical) follow at residues 369–389 and 423–443; these read LVYF…MNLF and IGAA…FLRL.

Belongs to the peptidase M50B family. As to quaternary structure, interacts with RseA. Zn(2+) serves as cofactor.

Its subcellular location is the cell inner membrane. In terms of biological role, a site-2 regulated intramembrane protease (S2P) that cleaves a peptide bond in the transmembrane region of RseA. Part of a regulated intramembrane proteolysis (RIP) cascade. Acts on DegS-cleaved RseA to release the cytoplasmic domain of RseA. This provides the cell with sigma-E (RpoE) activity through the proteolysis of RseA. This chain is Regulator of sigma E protease (rsep), found in Haemophilus influenzae (strain ATCC 51907 / DSM 11121 / KW20 / Rd).